A 156-amino-acid polypeptide reads, in one-letter code: Small ribosomal subunit protein uS7 (156 aa).

This sequence belongs to the universal ribosomal protein uS7 family. Part of the 30S ribosomal subunit. Contacts proteins S9 and S11.

Functionally, one of the primary rRNA binding proteins, it binds directly to 16S rRNA where it nucleates assembly of the head domain of the 30S subunit. Is located at the subunit interface close to the decoding center, probably blocks exit of the E-site tRNA. The protein is Small ribosomal subunit protein uS7 of Salmonella choleraesuis (strain SC-B67).